Consider the following 321-residue polypeptide: Ribosomal RNA small subunit methyltransferase H (321 aa).

S-adenosyl-L-methionine contacts are provided by residues Gly40–His42, Asp60, Phe84, Asp106, and Gln113.

It belongs to the methyltransferase superfamily. RsmH family.

Its subcellular location is the cytoplasm. It carries out the reaction cytidine(1402) in 16S rRNA + S-adenosyl-L-methionine = N(4)-methylcytidine(1402) in 16S rRNA + S-adenosyl-L-homocysteine + H(+). Its function is as follows. Specifically methylates the N4 position of cytidine in position 1402 (C1402) of 16S rRNA. The chain is Ribosomal RNA small subunit methyltransferase H from Haemophilus influenzae (strain PittEE).